A 357-amino-acid polypeptide reads, in one-letter code: DNA replication and repair protein RecF (357 aa).

30–37 contributes to the ATP binding site; the sequence is GANGSGKT.

Belongs to the RecF family.

It localises to the cytoplasm. In terms of biological role, the RecF protein is involved in DNA metabolism; it is required for DNA replication and normal SOS inducibility. RecF binds preferentially to single-stranded, linear DNA. It also seems to bind ATP. The polypeptide is DNA replication and repair protein RecF (Shigella dysenteriae serotype 1 (strain Sd197)).